The primary structure comprises 312 residues: ADP-L-glycero-D-manno-heptose-6-epimerase (312 aa).

Residues 10 to 11 (FI), 31 to 32 (DN), K38, K53, 75 to 79 (EGACS), and N92 each bind NADP(+). Catalysis depends on Y140, which acts as the Proton acceptor. Residue K144 coordinates NADP(+). N169 provides a ligand contact to substrate. NADP(+) contacts are provided by V170 and K178. K178 serves as the catalytic Proton acceptor. Residues S180, H187, 201-204 (FEGS), R209, and Y274 each bind substrate.

This sequence belongs to the NAD(P)-dependent epimerase/dehydratase family. HldD subfamily. Homopentamer. It depends on NADP(+) as a cofactor.

It carries out the reaction ADP-D-glycero-beta-D-manno-heptose = ADP-L-glycero-beta-D-manno-heptose. It functions in the pathway nucleotide-sugar biosynthesis; ADP-L-glycero-beta-D-manno-heptose biosynthesis; ADP-L-glycero-beta-D-manno-heptose from D-glycero-beta-D-manno-heptose 7-phosphate: step 4/4. Catalyzes the interconversion between ADP-D-glycero-beta-D-manno-heptose and ADP-L-glycero-beta-D-manno-heptose via an epimerization at carbon 6 of the heptose. The sequence is that of ADP-L-glycero-D-manno-heptose-6-epimerase from Proteus mirabilis (strain HI4320).